The following is an 828-amino-acid chain: MKLSRRSFMKANAVAAAAAAAGLSVPGVARAVVGQQEAIKWDKAPCRFCGTGCGVLVGTQQGRVVACQGDPDAPVNRGLNCIKGYFLPKIMYGKDRLTQPLLRMKNGKYDKEGEFTPITWDQAFDVMEEKFKTALKEKGPESIGMFGSGQWTIWEGYAASKLFKAGFRSNNIDPNARHCMASAVVGFMRTFGMDEPMGCYDDIEQADAFVLWGANMAEMHPILWSRITNRRLSNQNVTVAVLSTYQHRSFELADNGIIFTPQSDLVILNYIANYIIQNNAINQDFFSKHVNLRKGATDIGYGLRPTHPLEKAAKNPGSDASEPMSFEDYKAFVAEYTLEKTAEMTGVPKDQLEQLAQLYADPNKKVISYWTMGFNQHTRGVWANNLVYNLHLLTGKISQPGCGPFSLTGQPSACGTAREVGTFAHRLPADMVVTNEKHRDICEKKWNIPGGTIPAKIGLHAVAQDRALKDGKLNVYWTMCTNNMQAGPNINEERMPGWRDPRNFIIVSDPYPTVSALAADLILPTAMWVEKEGAYGNAERRTQFWRQQVQAPGEAKSDLWQLVQFSRRFKTEEVWPEELLAKKPELRGKTLYEVLYATPEVSKFPVSELAEDQLNDESRELGFYLQKGLFEEYAWFGRGHGHDLAPFDDYHKARGLRWPVVNGKETQWRYSEGNDPYVKAGEGYKFYGKPDGKAVIFALPFEPAAEAPDEEYDLWLSTGRVLEHWHTGSMTRRVPELHRAFPEAVLFIHPLDAKARDLRRGDKVKVVSRRGEVISIVETRGRNRPPQGLVYMPFFDAAQLVNKLTLDATDPLSKETDFKKCAVKLEKV.

The tat-type signal signal peptide spans 1–31 (MKLSRRSFMKANAVAAAAAAAGLSVPGVARA). Residues 39-95 (IKWDKAPCRFCGTGCGVLVGTQQGRVVACQGDPDAPVNRGLNCIKGYFLPKIMYGKD) enclose the 4Fe-4S Mo/W bis-MGD-type domain. Residues Cys-46, Cys-49, Cys-53, and Cys-81 each contribute to the [4Fe-4S] cluster site. Mo-bis(molybdopterin guanine dinucleotide)-binding positions include Lys-83, Gln-150, Asn-175, Cys-179, 212 to 219 (WGANMAEM), 243 to 247 (STYQH), 262 to 264 (QSD), Met-372, Gln-376, Asn-482, 508 to 509 (SD), Lys-531, Asp-558, and 718 to 727 (TGRVLEHWHT). Phe-794 is a substrate binding site. Mo-bis(molybdopterin guanine dinucleotide) contacts are provided by Asn-802 and Lys-819.

The protein belongs to the prokaryotic molybdopterin-containing oxidoreductase family. NasA/NapA/NarB subfamily. In terms of assembly, component of the periplasmic nitrate reductase NapAB complex composed of NapA and NapB. Requires [4Fe-4S] cluster as cofactor. The cofactor is Mo-bis(molybdopterin guanine dinucleotide). Predicted to be exported by the Tat system. The position of the signal peptide cleavage has not been experimentally proven.

It localises to the periplasm. It catalyses the reaction 2 Fe(II)-[cytochrome] + nitrate + 2 H(+) = 2 Fe(III)-[cytochrome] + nitrite + H2O. Functionally, catalytic subunit of the periplasmic nitrate reductase complex NapAB. Receives electrons from NapB and catalyzes the reduction of nitrate to nitrite. The polypeptide is Periplasmic nitrate reductase (Escherichia coli O8 (strain IAI1)).